A 933-amino-acid chain; its full sequence is Phosphoenolpyruvate carboxylase (933 aa).

Residues His-158 and Lys-592 contribute to the active site.

Belongs to the PEPCase type 1 family. It depends on Mg(2+) as a cofactor.

The enzyme catalyses oxaloacetate + phosphate = phosphoenolpyruvate + hydrogencarbonate. Functionally, forms oxaloacetate, a four-carbon dicarboxylic acid source for the tricarboxylic acid cycle. In Nitrosomonas eutropha (strain DSM 101675 / C91 / Nm57), this protein is Phosphoenolpyruvate carboxylase.